Consider the following 118-residue polypeptide: Large ribosomal subunit protein uL18 (118 aa).

The protein belongs to the universal ribosomal protein uL18 family. As to quaternary structure, part of the 50S ribosomal subunit; part of the 5S rRNA/L5/L18/L25 subcomplex. Contacts the 5S and 23S rRNAs.

In terms of biological role, this is one of the proteins that bind and probably mediate the attachment of the 5S RNA into the large ribosomal subunit, where it forms part of the central protuberance. The chain is Large ribosomal subunit protein uL18 from Ligilactobacillus salivarius (strain UCC118) (Lactobacillus salivarius).